A 66-amino-acid chain; its full sequence is Cell division protein FtsB (66 aa).

At 1–3 (MKM) the chain is on the cytoplasmic side. Residues 4–21 (LKIFLLFLLFWLQCSLWI) form a helical membrane-spanning segment. The Extracellular segment spans residues 22 to 66 (GKNGILDYIKIYKKIIVQKKKNEDFQIRNNQLILEIERLNNAIKN). Positions 38–66 (VQKKKNEDFQIRNNQLILEIERLNNAIKN) form a coiled coil.

The protein belongs to the FtsB family.

It localises to the cell membrane. Essential cell division protein. May link together the upstream cell division proteins, which are predominantly cytoplasmic, with the downstream cell division proteins, which are predominantly extracellular. The polypeptide is Cell division protein FtsB (Buchnera aphidicola subsp. Schizaphis graminum (strain Sg)).